A 301-amino-acid polypeptide reads, in one-letter code: Sulfate adenylyltransferase subunit 2 (301 aa).

Belongs to the PAPS reductase family. CysD subfamily. In terms of assembly, heterodimer composed of CysD, the smaller subunit, and CysN.

It carries out the reaction sulfate + ATP + H(+) = adenosine 5'-phosphosulfate + diphosphate. It participates in sulfur metabolism; hydrogen sulfide biosynthesis; sulfite from sulfate: step 1/3. In terms of biological role, with CysN forms the ATP sulfurylase (ATPS) that catalyzes the adenylation of sulfate producing adenosine 5'-phosphosulfate (APS) and diphosphate, the first enzymatic step in sulfur assimilation pathway. APS synthesis involves the formation of a high-energy phosphoric-sulfuric acid anhydride bond driven by GTP hydrolysis by CysN coupled to ATP hydrolysis by CysD. The polypeptide is Sulfate adenylyltransferase subunit 2 (Shewanella woodyi (strain ATCC 51908 / MS32)).